A 1682-amino-acid chain; its full sequence is Cilia- and flagella-associated protein 43 (1682 aa).

WD repeat units lie at residues asparagine 168–histidine 207, proline 262–leucine 305, aspartate 315–lysine 354, glutamate 358–lysine 397, leucine 488–isoleucine 527, and serine 697–alanine 738. Positions arginine 767–glutamate 790 are disordered. Coiled coils occupy residues lysine 926 to glutamine 960 and serine 1171 to arginine 1223.

This sequence belongs to the CFAP43 family. As to expression, expressed in testis. Expressed in the lung, brain, oviduct and nasal cavity.

It localises to the cell projection. Its subcellular location is the cilium. The protein resides in the flagellum. The protein localises to the cytoplasm. It is found in the cytoskeleton. It localises to the flagellum axoneme. Its subcellular location is the cilium axoneme. Functionally, flagellar protein involved in sperm flagellum axoneme organization and function. Involved in the regulation of the beating frequency of motile cilia on the epithelial cells of the respiratory tract. This Mus musculus (Mouse) protein is Cilia- and flagella-associated protein 43.